The chain runs to 463 residues: Bifunctional protein HldE (463 aa).

The interval 1–315 (MKKILVIGDL…LILNQTHPKI (315 aa)) is ribokinase. Residue 191-194 (NRAE) coordinates ATP. Aspartate 260 is an active-site residue. Residues 334–463 (FTNGCFDLLH…IEKIKRTHND (130 aa)) are cytidylyltransferase.

It in the N-terminal section; belongs to the carbohydrate kinase PfkB family. The protein in the C-terminal section; belongs to the cytidylyltransferase family. As to quaternary structure, homodimer.

It carries out the reaction D-glycero-beta-D-manno-heptose 7-phosphate + ATP = D-glycero-beta-D-manno-heptose 1,7-bisphosphate + ADP + H(+). The catalysed reaction is D-glycero-beta-D-manno-heptose 1-phosphate + ATP + H(+) = ADP-D-glycero-beta-D-manno-heptose + diphosphate. The protein operates within nucleotide-sugar biosynthesis; ADP-L-glycero-beta-D-manno-heptose biosynthesis; ADP-L-glycero-beta-D-manno-heptose from D-glycero-beta-D-manno-heptose 7-phosphate: step 1/4. Its pathway is nucleotide-sugar biosynthesis; ADP-L-glycero-beta-D-manno-heptose biosynthesis; ADP-L-glycero-beta-D-manno-heptose from D-glycero-beta-D-manno-heptose 7-phosphate: step 3/4. In terms of biological role, catalyzes the phosphorylation of D-glycero-D-manno-heptose 7-phosphate at the C-1 position to selectively form D-glycero-beta-D-manno-heptose-1,7-bisphosphate. Catalyzes the ADP transfer from ATP to D-glycero-beta-D-manno-heptose 1-phosphate, yielding ADP-D-glycero-beta-D-manno-heptose. In Helicobacter pylori (strain HPAG1), this protein is Bifunctional protein HldE.